A 183-amino-acid polypeptide reads, in one-letter code: Nucleoside triphosphate pyrophosphatase (183 aa).

Residue D71 is the Proton acceptor of the active site.

The protein belongs to the Maf family. It depends on a divalent metal cation as a cofactor.

It is found in the cytoplasm. The enzyme catalyses a ribonucleoside 5'-triphosphate + H2O = a ribonucleoside 5'-phosphate + diphosphate + H(+). It catalyses the reaction a 2'-deoxyribonucleoside 5'-triphosphate + H2O = a 2'-deoxyribonucleoside 5'-phosphate + diphosphate + H(+). Nucleoside triphosphate pyrophosphatase. May have a dual role in cell division arrest and in preventing the incorporation of modified nucleotides into cellular nucleic acids. The chain is Nucleoside triphosphate pyrophosphatase from Campylobacter jejuni subsp. jejuni serotype O:2 (strain ATCC 700819 / NCTC 11168).